The sequence spans 610 residues: MTATASHTRARPLGASEIEHATRIAEPDFDLLDALYRTDDPDDQARLLARVVLSAFDNYYAVSRRIPALAQAAFEARDWPVTVRLSKIRIGLYTACIDQLVPLLKAGLPELTTDEQLWPTAEAELLAAIEGRYEADFAFAFWQSLRRKLVSDEWRPVSYDAGSTARRTTSPAAVLKTTATTLPITAEVIAGILDEAGFRVPWRDRDGDAALAAQAIETALEPLSPRPGEPVKIEIADSGFLRNRGACLVGRIKLRDRGDMPMRNLPLLIALLNEKDGLVVDAVLTDSDELQYAFSSTLANYHATNPRYHELARLLYELMPKRPLGTQYSCIGFHHLGKVAVMSEILAEHRKTKEKLATAPGFKGTVAIAFTMPSSAYVLKIIRDHPTDDYKFDYFDGLDEVLRKYNLVHEIDRAGSMLDNIIYSNVKLDRAMFAPELLDELLEAGIGTVTLDRGALVFRHLIVQIKLTPLPLYLANASAAESRAAVINLGDCIKNNAAADIFNKDLDGRNYGVSRIRKVYLFDYDAVEPLTSVTVSRDGAAPGEFDNGMVFRPQEMLEGLRIDDPGLRRAFRDAHPELMQADYWEGMQQALRDGKVPKVMNYPASRRLRR.

ATP is bound by residues 359 to 365 (APGFKGT) and K380. The active site involves D419.

It belongs to the AceK family.

The protein resides in the cytoplasm. It carries out the reaction L-seryl-[isocitrate dehydrogenase] + ATP = O-phospho-L-seryl-[isocitrate dehydrogenase] + ADP + H(+). Bifunctional enzyme which can phosphorylate or dephosphorylate isocitrate dehydrogenase (IDH) on a specific serine residue. This is a regulatory mechanism which enables bacteria to bypass the Krebs cycle via the glyoxylate shunt in response to the source of carbon. When bacteria are grown on glucose, IDH is fully active and unphosphorylated, but when grown on acetate or ethanol, the activity of IDH declines drastically concomitant with its phosphorylation. This is Isocitrate dehydrogenase kinase/phosphatase from Rhodopseudomonas palustris (strain ATCC BAA-98 / CGA009).